The chain runs to 546 residues: Glucose-6-phosphate isomerase (546 aa).

Glu-357 acts as the Proton donor in catalysis. Catalysis depends on residues His-389 and Lys-509.

It belongs to the GPI family.

It localises to the cytoplasm. It catalyses the reaction alpha-D-glucose 6-phosphate = beta-D-fructose 6-phosphate. Its pathway is carbohydrate biosynthesis; gluconeogenesis. It participates in carbohydrate degradation; glycolysis; D-glyceraldehyde 3-phosphate and glycerone phosphate from D-glucose: step 2/4. In terms of biological role, catalyzes the reversible isomerization of glucose-6-phosphate to fructose-6-phosphate. The protein is Glucose-6-phosphate isomerase of Anaeromyxobacter dehalogenans (strain 2CP-1 / ATCC BAA-258).